Reading from the N-terminus, the 571-residue chain is Proline--tRNA ligase (571 aa).

The protein belongs to the class-II aminoacyl-tRNA synthetase family. ProS type 1 subfamily. As to quaternary structure, homodimer.

It is found in the cytoplasm. The enzyme catalyses tRNA(Pro) + L-proline + ATP = L-prolyl-tRNA(Pro) + AMP + diphosphate. Its function is as follows. Catalyzes the attachment of proline to tRNA(Pro) in a two-step reaction: proline is first activated by ATP to form Pro-AMP and then transferred to the acceptor end of tRNA(Pro). As ProRS can inadvertently accommodate and process non-cognate amino acids such as alanine and cysteine, to avoid such errors it has two additional distinct editing activities against alanine. One activity is designated as 'pretransfer' editing and involves the tRNA(Pro)-independent hydrolysis of activated Ala-AMP. The other activity is designated 'posttransfer' editing and involves deacylation of mischarged Ala-tRNA(Pro). The misacylated Cys-tRNA(Pro) is not edited by ProRS. The chain is Proline--tRNA ligase from Shewanella putrefaciens (strain CN-32 / ATCC BAA-453).